Consider the following 268-residue polypeptide: Resolvase (268 aa).

Residues 47–250 enclose the Tyr recombinase domain; sequence ELPKYLLAPE…FALDVAARHR (204 aa). Residues Arg-82, Lys-114, His-202, Arg-205, and His-228 contribute to the active site. Catalysis depends on Tyr-237, which acts as the O-(3'-phospho-DNA)-tyrosine intermediate.

Belongs to the 'phage' integrase family.

Acts as a repressor of transcription and as a site-specific resolvase that cleaves at the RfsF site. The polypeptide is Resolvase (resD) (Escherichia coli (strain K12)).